The primary structure comprises 217 residues: Thymidylate kinase (217 aa).

Residue 11–18 (GLEGAGKS) participates in ATP binding.

The protein belongs to the thymidylate kinase family.

It carries out the reaction dTMP + ATP = dTDP + ADP. Phosphorylation of dTMP to form dTDP in both de novo and salvage pathways of dTTP synthesis. The polypeptide is Thymidylate kinase (Alkalilimnicola ehrlichii (strain ATCC BAA-1101 / DSM 17681 / MLHE-1)).